We begin with the raw amino-acid sequence, 294 residues long: Movement protein (294 aa).

In terms of assembly, interacts with nucleoprotein.

In terms of biological role, transports viral genome to neighboring plant cells directly through plasmosdesmata, without any budding. The movement protein allows efficient cell to cell propagation, by bypassing the host cell wall barrier. Displays an RNA-binding activity. The polypeptide is Movement protein (3) (Rice yellow stunt virus (RYSV)).